The chain runs to 335 residues: DNA polymerase beta (335 aa).

A Glycyl lysine isopeptide (Lys-Gly) (interchain with G-Cter in ubiquitin) cross-link involves residue Lys-41. Lys-60 lines the K(+) pocket. Lys-60 provides a ligand contact to Na(+). A Glycyl lysine isopeptide (Lys-Gly) (interchain with G-Cter in ubiquitin) cross-link involves residue Lys-61. Positions 62 and 65 each coordinate K(+). Na(+) contacts are provided by Leu-62 and Val-65. Residue Lys-72 is the Nucleophile; Schiff-base intermediate with DNA; for 5'-dRP lyase activity of the active site. Lys-72 is subject to N6-acetyllysine. Lys-81 participates in a covalent cross-link: Glycyl lysine isopeptide (Lys-Gly) (interchain with G-Cter in ubiquitin). Arg-83 carries the post-translational modification Omega-N-methylarginine; by PRMT6. K(+)-binding residues include Thr-101, Val-103, and Ile-106. Thr-101, Val-103, and Ile-106 together coordinate Na(+). Arg-149 lines the dATP pocket. Arg-149 provides a ligand contact to dCTP. A dGTP-binding site is contributed by Arg-149. Arg-149 contacts dTTP. Position 152 is an omega-N-methylarginine; by PRMT6 (Arg-152). Residues Ser-180, Arg-183, Gly-189, and Asp-190 each coordinate dATP. Positions 180, 183, 189, and 190 each coordinate dCTP. Residues Ser-180, Arg-183, Gly-189, Asp-190, and Asp-192 each coordinate dGTP. DTTP-binding residues include Ser-180, Arg-183, Gly-189, and Asp-190. Residues 183–192 form a DNA-binding region; that stretch reads RGAESSGDMD. The Mg(2+) site is built by Asp-190, Asp-192, and Asp-256.

This sequence belongs to the DNA polymerase type-X family. As to quaternary structure, monomer. Binds single-stranded DNA (ssDNA). Interacts with APEX1, LIG1, LIG3, FEN1, PCNA and XRCC1. Interacts with HUWE1/ARF-BP1, STUB1/CHIP and USP47. Interacts with FAM168A. Mg(2+) is required as a cofactor. In terms of processing, methylation by PRMT6 stimulates the polymerase activity by enhancing DNA binding and processivity. Ubiquitinated at Lys-41, Lys-61 and Lys-81: monoubiquitinated by HUWE1/ARF-BP1. Monoubiquitinated protein is then the target of STUB1/CHIP, which catalyzes polyubiquitination from monoubiquitin, leading to degradation by the proteasome. USP47 mediates the deubiquitination of monoubiquitinated protein, preventing polyubiquitination by STUB1/CHIP and its subsequent degradation.

The protein resides in the nucleus. It is found in the cytoplasm. The enzyme catalyses DNA(n) + a 2'-deoxyribonucleoside 5'-triphosphate = DNA(n+1) + diphosphate. The catalysed reaction is a 5'-end 2'-deoxyribose-2'-deoxyribonucleotide-DNA = (2E,4S)-4-hydroxypenten-2-al-5-phosphate + a 5'-end 5'-phospho-2'-deoxyribonucleoside-DNA + H(+). It catalyses the reaction 2'-deoxyribonucleotide-(2'-deoxyribose 5'-phosphate)-2'-deoxyribonucleotide-DNA = a 3'-end 2'-deoxyribonucleotide-(2,3-dehydro-2,3-deoxyribose 5'-phosphate)-DNA + a 5'-end 5'-phospho-2'-deoxyribonucleoside-DNA + H(+). Functionally, repair polymerase that plays a key role in base-excision repair. During this process, the damaged base is excised by specific DNA glycosylases, the DNA backbone is nicked at the abasic site by an apurinic/apyrimidic (AP) endonuclease, and POLB removes 5'-deoxyribose-phosphate from the preincised AP site acting as a 5'-deoxyribose-phosphate lyase (5'-dRP lyase); through its DNA polymerase activity, it adds one nucleotide to the 3' end of the arising single-nucleotide gap. Conducts 'gap-filling' DNA synthesis in a stepwise distributive fashion rather than in a processive fashion as for other DNA polymerases. It is also able to cleave sugar-phosphate bonds 3' to an intact AP site, acting as an AP lyase. The sequence is that of DNA polymerase beta (POLB) from Homo sapiens (Human).